Reading from the N-terminus, the 285-residue chain is Pantothenate synthetase (285 aa).

Position 32–39 (M32–H39) interacts with ATP. H39 (proton donor) is an active-site residue. Position 63 (Q63) interacts with (R)-pantoate. Q63 is a binding site for beta-alanine. G149–D152 serves as a coordination point for ATP. Q155 lines the (R)-pantoate pocket. ATP-binding positions include V178 and M186 to R189.

The protein belongs to the pantothenate synthetase family. In terms of assembly, homodimer.

Its subcellular location is the cytoplasm. The catalysed reaction is (R)-pantoate + beta-alanine + ATP = (R)-pantothenate + AMP + diphosphate + H(+). Its pathway is cofactor biosynthesis; (R)-pantothenate biosynthesis; (R)-pantothenate from (R)-pantoate and beta-alanine: step 1/1. Its function is as follows. Catalyzes the condensation of pantoate with beta-alanine in an ATP-dependent reaction via a pantoyl-adenylate intermediate. This is Pantothenate synthetase from Ruegeria pomeroyi (strain ATCC 700808 / DSM 15171 / DSS-3) (Silicibacter pomeroyi).